Reading from the N-terminus, the 474-residue chain is 15-cis-phytoene desaturase (474 aa).

Belongs to the carotenoid/retinoid oxidoreductase family.

Its subcellular location is the cell membrane. It catalyses the reaction 2 a plastoquinone + 15-cis-phytoene = 9,9',15-tri-cis-zeta-carotene + 2 a plastoquinol. The protein operates within carotenoid biosynthesis; lycopene biosynthesis. Its activity is regulated as follows. Inhibited by the herbicide norflurazon in a non-competitive way. Its function is as follows. This enzyme converts phytoene into zeta-carotene via the intermediary of phytofluene by the symmetrical introduction of two double bonds at the C-11 and C-11' positions of phytoene. Also active with phytofluene and 1,2-epoxyphytoene as substrates. This chain is 15-cis-phytoene desaturase (pds), found in Synechococcus elongatus (strain ATCC 33912 / PCC 7942 / FACHB-805) (Anacystis nidulans R2).